Reading from the N-terminus, the 492-residue chain is Transcript termination protein OPG145 (492 aa).

The Helicase ATP-binding domain occupies 100–256; sequence MIELKRPLYI…NSIINIAKLS (157 aa). 113–120 provides a ligand contact to ATP; that stretch reads LACGFGKT. Positions 206 to 209 match the DEAH box motif; it reads DESH.

The protein belongs to the helicase family. Poxviruses subfamily. Interacts with OPG087. Might be part of a transcription complex composed at least of OPG087, OPG110, and OPG145.

Its subcellular location is the virion. DNA helicase which seems to act as a postreplicative transcription termination factor. Involved in ATP-dependent release of nascent RNA. Forms a stable complex with single-stranded DNA, and to a lesser extent RNA. The protein is Transcript termination protein OPG145 (OPG145) of Cynomys gunnisoni (Gunnison's prairie dog).